Reading from the N-terminus, the 525-residue chain is GMP synthase [glutamine-hydrolyzing] (525 aa).

The 199-residue stretch at arginine 9–leucine 207 folds into the Glutamine amidotransferase type-1 domain. The active-site Nucleophile is the cysteine 86. Catalysis depends on residues histidine 181 and glutamate 183. Residues tryptophan 208–arginine 400 enclose the GMPS ATP-PPase domain. Serine 235–serine 241 serves as a coordination point for ATP.

Homodimer.

It carries out the reaction XMP + L-glutamine + ATP + H2O = GMP + L-glutamate + AMP + diphosphate + 2 H(+). The protein operates within purine metabolism; GMP biosynthesis; GMP from XMP (L-Gln route): step 1/1. Its function is as follows. Catalyzes the synthesis of GMP from XMP. This Salmonella typhimurium (strain LT2 / SGSC1412 / ATCC 700720) protein is GMP synthase [glutamine-hydrolyzing].